We begin with the raw amino-acid sequence, 442 residues long: tRNA-2-methylthio-N(6)-dimethylallyladenosine synthase (442 aa).

The MTTase N-terminal domain maps to 2-117 (KSLYIKTYGC…LPELIVKASR (116 aa)). Residues C11, C47, C80, C157, C161, and C164 each coordinate [4Fe-4S] cluster. The Radical SAM core domain maps to 143–374 (NSQGSSAFLS…QKLINKQQLE (232 aa)). Residues 377–441 (QSMVGKTIPV…QNSLLGRELQ (65 aa)) form the TRAM domain.

Belongs to the methylthiotransferase family. MiaB subfamily. In terms of assembly, monomer. Requires [4Fe-4S] cluster as cofactor.

It is found in the cytoplasm. It catalyses the reaction N(6)-dimethylallyladenosine(37) in tRNA + (sulfur carrier)-SH + AH2 + 2 S-adenosyl-L-methionine = 2-methylsulfanyl-N(6)-dimethylallyladenosine(37) in tRNA + (sulfur carrier)-H + 5'-deoxyadenosine + L-methionine + A + S-adenosyl-L-homocysteine + 2 H(+). Its function is as follows. Catalyzes the methylthiolation of N6-(dimethylallyl)adenosine (i(6)A), leading to the formation of 2-methylthio-N6-(dimethylallyl)adenosine (ms(2)i(6)A) at position 37 in tRNAs that read codons beginning with uridine. This is tRNA-2-methylthio-N(6)-dimethylallyladenosine synthase from Wolbachia sp. subsp. Brugia malayi (strain TRS).